The following is a 173-amino-acid chain: NADH-ubiquinone oxidoreductase chain 6 (173 aa).

5 consecutive transmembrane segments (helical) span residues 1-21, 27-47, 48-68, 87-107, and 139-159; these read MTYFVLFLGLCFVLGSLAVAS, YGVVGLVLASIAGCGWLLSLG, VSFVSLVLFMVYLGGMLVVFV, VVGYGVGFVAVLMVGLIVGGF, and CGVGMFLVAGWGLLLTLFVVL.

It belongs to the complex I subunit 6 family.

It is found in the mitochondrion membrane. It carries out the reaction a ubiquinone + NADH + 5 H(+)(in) = a ubiquinol + NAD(+) + 4 H(+)(out). In terms of biological role, core subunit of the mitochondrial membrane respiratory chain NADH dehydrogenase (Complex I) that is believed to belong to the minimal assembly required for catalysis. Complex I functions in the transfer of electrons from NADH to the respiratory chain. The immediate electron acceptor for the enzyme is believed to be ubiquinone. This chain is NADH-ubiquinone oxidoreductase chain 6 (MT-ND6), found in Aethia cristatella (Crested auklet).